Consider the following 37-residue polypeptide: Large ribosomal subunit protein bL36c (37 aa).

Belongs to the bacterial ribosomal protein bL36 family.

It localises to the plastid. It is found in the chloroplast. The protein is Large ribosomal subunit protein bL36c of Dioscorea elephantipes (Elephant's foot yam).